The following is a 234-amino-acid chain: Large ribosomal subunit protein uL1 (234 aa).

This sequence belongs to the universal ribosomal protein uL1 family. In terms of assembly, part of the 50S ribosomal subunit.

Functionally, binds directly to 23S rRNA. The L1 stalk is quite mobile in the ribosome, and is involved in E site tRNA release. In terms of biological role, protein L1 is also a translational repressor protein, it controls the translation of the L11 operon by binding to its mRNA. The chain is Large ribosomal subunit protein uL1 from Escherichia coli (strain 55989 / EAEC).